The chain runs to 316 residues: 4-diphosphocytidyl-2-C-methyl-D-erythritol kinase (316 aa).

Residue Lys-32 is part of the active site. Position 126 to 136 (126 to 136) interacts with ATP; the sequence is PVGAGLGGGSA. The active site involves Asp-168.

The protein belongs to the GHMP kinase family. IspE subfamily.

It carries out the reaction 4-CDP-2-C-methyl-D-erythritol + ATP = 4-CDP-2-C-methyl-D-erythritol 2-phosphate + ADP + H(+). It functions in the pathway isoprenoid biosynthesis; isopentenyl diphosphate biosynthesis via DXP pathway; isopentenyl diphosphate from 1-deoxy-D-xylulose 5-phosphate: step 3/6. In terms of biological role, catalyzes the phosphorylation of the position 2 hydroxy group of 4-diphosphocytidyl-2C-methyl-D-erythritol. The sequence is that of 4-diphosphocytidyl-2-C-methyl-D-erythritol kinase from Bifidobacterium longum subsp. infantis (strain ATCC 15697 / DSM 20088 / JCM 1222 / NCTC 11817 / S12).